We begin with the raw amino-acid sequence, 355 residues long: Na(+)/H(+) exchange regulatory cofactor NHE-RF1 (355 aa).

Ser-2 is subject to N-acetylserine. Ser-2 and Ser-46 each carry phosphoserine. A PDZ 1 domain is found at 14–94 (LCCLEKGPNG…AVRLLVVDPE (81 aa)). Composition is skewed to basic and acidic residues over residues 110-119 (LLRPQEKSEQ) and 127-146 (DTHE…RELR). The tract at residues 110–146 (LLRPQEKSEQAEPPAAADTHEAGDQNEAEKSHLRELR) is disordered. Residues 149-229 (LCTMKKGPNG…EAKLLVVDKE (81 aa)) form the PDZ 2 domain. The segment at 244–355 (EHLDGPLPEP…SKKNELFSNL (112 aa)) is disordered. Residues 259 to 268 (IQKESSREAL) are compositionally biased toward basic and acidic residues. Ser-264, Ser-275, Ser-285, and Ser-286 each carry phosphoserine. Residues 270-286 (EPASESPRPALARSASS) show a composition bias toward low complexity. Position 288 is a phosphothreonine (Thr-288). 3 positions are modified to phosphoserine: Ser-289, Ser-294, and Ser-297. Positions 303–323 (STEPSSTSSSSSDPILDLNIS) are enriched in low complexity. Over residues 345-355 (WSKKNELFSNL) the composition is skewed to basic and acidic residues.

As to quaternary structure, homodimer, and heterodimer with NHERF2. Binds the N-termini of EZR, RDX and MSN. Binds the C-termini of PDGFRA, PDGFRB, ADRB2 and NOS2. Binds ARHGAP17, EPI64, RACK1, OPRK1, GNAQ, CTNNB1, PLCB3 and CLCN3. Forms a complex with CFTR and SLC4A7. Forms a complex with SLC4A7 and ATP6V1B1. Binds PDZK1. Binds the C-terminus of PAG1. In resting T-cells, part of a PAG1-NHERF1-MSN complex which is disrupted upon TCR activation. Directly interacts with HTR4. Interacts with MCC. Interacts with TRPC4 (via the PDZ-binding domain). Interacts (via the PDZ 1 domain) with PODXL (via the C-terminal PDZ-binding motif DTHL); interaction is not detected in glomerular epithelium cells. Interacts (via the PDZ 1 domain) with PODXL (via the C-terminal PDZ-binding motif DTHL); the interaction take place early in the secretory pathway and is necessary for its apical membrane sorting. Interacts with SLC34A1. Interacts with CFTR, SLC26A3 and SLC26A6. Interacts (via PDZ domains) with ACE2 (via PDZ-binding motif); the interaction may enhance ACE2 membrane residence. As to expression, expressed in spermatogenic cells.

The protein localises to the cytoplasm. It is found in the apical cell membrane. The protein resides in the cell projection. Its subcellular location is the filopodium. It localises to the ruffle. The protein localises to the microvillus. It is found in the endomembrane system. Functionally, scaffold protein that connects plasma membrane proteins with members of the ezrin/moesin/radixin family and thereby helps to link them to the actin cytoskeleton and to regulate their surface expression. Necessary for recycling of internalized ADRB2. Was first known to play a role in the regulation of the activity and subcellular location of SLC9A3. Necessary for cAMP-mediated phosphorylation and inhibition of SLC9A3. May enhance Wnt signaling. May participate in HTR4 targeting to microvilli. Involved in the regulation of phosphate reabsorption in the renal proximal tubules. Involved in sperm capacitation. May participate in the regulation of the chloride and bicarbonate homeostasis in spermatozoa. This Mus musculus (Mouse) protein is Na(+)/H(+) exchange regulatory cofactor NHE-RF1 (Nherf1).